Reading from the N-terminus, the 160-residue chain is Sulfur-rich protein (160 aa).

A run of 2 helical transmembrane segments spans residues 63 to 83 (ITMV…TFVL) and 92 to 112 (FLFL…SVCM).

The protein localises to the membrane. This is Sulfur-rich protein (srp) from Chlamydophila psittaci (strain ATCC VR-125 / 6BC) (Chlamydia psittaci).